The primary structure comprises 103 residues: uncharacterized protein (103 aa).

This is an uncharacterized protein from Escherichia coli (strain K12).